A 688-amino-acid chain; its full sequence is Elongation factor G 2 (688 aa).

Residues 7 to 282 enclose the tr-type G domain; sequence DSIRNIGIIS…AVAAYLPSPR (276 aa). GTP-binding positions include 16–23, 80–84, and 134–137; these read SHIDAGKT, DTPGH, and NKMD.

Belongs to the TRAFAC class translation factor GTPase superfamily. Classic translation factor GTPase family. EF-G/EF-2 subfamily.

Its subcellular location is the cytoplasm. Catalyzes the GTP-dependent ribosomal translocation step during translation elongation. During this step, the ribosome changes from the pre-translocational (PRE) to the post-translocational (POST) state as the newly formed A-site-bound peptidyl-tRNA and P-site-bound deacylated tRNA move to the P and E sites, respectively. Catalyzes the coordinated movement of the two tRNA molecules, the mRNA and conformational changes in the ribosome. In Geobacter metallireducens (strain ATCC 53774 / DSM 7210 / GS-15), this protein is Elongation factor G 2.